The sequence spans 447 residues: Protein king tubby (447 aa).

The disordered stretch occupies residues 54-84; sequence GSPQNPDQILSNNSSSITMNSSRNNSNNMRS. A compositionally biased stretch (low complexity) spans 62–84; the sequence is ILSNNSSSITMNSSRNNSNNMRS. Serine 136 carries the phosphoserine modification. A compositionally biased stretch (low complexity) spans 168–182; the sequence is EGAAMEGSNGAANGS. Residues 168 to 191 are disordered; that stretch reads EGAAMEGSNGAANGSGSVGGSGES.

Belongs to the TUB family.

It is found in the cytoplasm. The protein resides in the nucleus. It localises to the cell projection. The protein localises to the cilium membrane. Its subcellular location is the rhabdomere. The sequence is that of Protein king tubby from Drosophila grimshawi (Hawaiian fruit fly).